The sequence spans 101 residues: Apolipoprotein C-II (101 aa).

The first 22 residues, M1 to G22, serve as a signal peptide directing secretion. A lipid binding region spans residues A66–M74. The segment at S78–E101 is lipoprotein lipase cofactor.

Belongs to the apolipoprotein C2 family. In terms of processing, proapolipoprotein C-II is synthesized as a sialic acid containing glycoprotein which is subsequently desialylated prior to its proteolytic processing. Proapolipoprotein C-II, the major form found in plasma undergoes proteolytic cleavage of its N-terminal hexapeptide to generate apolipoprotein C-II, which occurs as the minor form in plasma.

The protein resides in the secreted. Component of chylomicrons, very low-density lipoproteins (VLDL), low-density lipoproteins (LDL), and high-density lipoproteins (HDL) in plasma. Plays an important role in lipoprotein metabolism as an activator of lipoprotein lipase. Both proapolipoprotein C-II and apolipoprotein C-II can activate lipoprotein lipase. This is Apolipoprotein C-II (APOC2) from Saimiri boliviensis boliviensis (Bolivian squirrel monkey).